The primary structure comprises 1604 residues: Collagen alpha-1(XVI) chain (1604 aa).

The first 21 residues, 1–21 (MWVSWAPGLWLLGLWATFGHG), serve as a signal peptide directing secretion. Residue asparagine 47 is glycosylated (N-linked (GlcNAc...) asparagine). The 182-residue stretch at 50-231 (GFNLIHRLSL…LQQVHIYCDP (182 aa)) folds into the Laminin G-like domain. The nonhelical region 10 (NC10) stretch occupies residues 232 to 374 (ELVLEEGCCE…SPDAPLQCAE (143 aa)). Basic and acidic residues predominate over residues 301–311 (AERGAKVHQET). The disordered stretch occupies residues 301–509 (AERGAKVHQE…KGEKGDPCEV (209 aa)). Asparagine 327 carries an N-linked (GlcNAc...) asparagine glycan. The 49-residue stretch at 375–423 (GPKGEKGESGALGPSGLPGSTGEKGQKGEKGDGGIKGVPGKPGRDGRPG) folds into the Collagen-like 1 domain. Residues 375-506 (GPKGEKGESG…PGVKGEKGDP (132 aa)) are triple-helical region 9 (COL9) with 3 imperfections. Residues 383–397 (SGALGPSGLPGSTGE) show a composition bias toward low complexity. Over residues 398 to 407 (KGQKGEKGDG) the composition is skewed to basic and acidic residues. Positions 449–460 (PGPPGLPGPPGI) are enriched in pro residues. Positions 486–495 (GKEGPGGKPG) are enriched in gly residues. The tract at residues 507–521 (CEVCPTLPEGFQNFV) is nonhelical region 9 (NC9). The tract at residues 522–555 (GLPGKPGPKGEPGDPVPARGDPGIQGIKGEKGEP) is triple-helical region 8 (COL8) with 1 imperfection. Positions 540-542 (RGD) match the Cell attachment site motif. Residues 556–572 (CLSCSSVVGAQHLVSST) are nonhelical region 8 (NC8). The segment at 573 to 631 (GASGDVGSPGFGLPGLPGRAGVPGLKGEKGNFGEAGPAGSPGPPGPVGPAGIKGAKGEP) is triple-helical region 7 (COL7) with 1 imperfection. 2 consecutive Collagen-like domains span residues 573-633 (GASG…EPCE) and 667-721 (GLPG…GEKG). The disordered stretch occupies residues 604–917 (FGEAGPAGSP…PPGIPGPPGP (314 aa)). Residues 632–652 (CEPCPALSNLQDGDVRVVALP) are nonhelical region 7 (NC7). Residues 653–723 (GPSGEKGEPG…AGPKGEKGDG (71 aa)) are triple-helical region 6 (COL6) with 1 imperfection. A compositionally biased stretch (basic and acidic residues) spans 674-684 (KAGERGLKGQK). A compositionally biased stretch (low complexity) spans 686–702 (DAGNPGDPGTPGTTGRP). Positions 724 to 738 (CTACPSLQGTVTDMA) are nonhelical region 6 (NC6). The interval 739–876 (GRPGQPGPKG…RGEKGEPGEC (138 aa)) is triple-helical region 5 (COL5) with 3 imperfections. Composition is skewed to low complexity over residues 766-781 (LPGVQGPPGLKGVQGE), 792-808 (PQGEPGAPGLPGIQGLP), and 826-846 (PGVKGATGPVGPPGASVSGPP). A Collagen-like 4 domain is found at 788–840 (GVQGPQGEPGAPGLPGIQGLPGPRGPPGPTGEKGAQGSPGVKGATGPVGPPGA). The span at 864–873 (KGPRGEKGEP) shows a compositional bias: basic and acidic residues. The segment at 877–887 (SCPSQGDLIFS) is nonhelical region 5 (NC5). The Collagen-like 5 domain occupies 888 to 938 (GMPGAPGLWMGSSWQPGPQGPPGIPGPPGPPGVPGLQGVPGNNGLPGQPGL). The interval 888–939 (GMPGAPGLWMGSSWQPGPQGPPGIPGPPGPPGVPGLQGVPGNNGLPGQPGLT) is triple-helical region 4 (COL4) with 2 imperfections. Over residues 905-917 (PQGPPGIPGPPGP) the composition is skewed to pro residues. The interval 940–973 (AELGSLPIEQHLLKSICGDCVQGQRAHPGYLVEK) is nonhelical region 4 (NC4). A triple-helical region 3 (COL3) region spans residues 974–988 (GEKGDQGIPGVPGLD). Residues 989–1011 (NCAQCFLSLERPRAEEARGDNSE) form a nonhelical region 3 (NC3) region. Disordered regions lie at residues 1001 to 1429 (RAEE…VPGS) and 1468 to 1517 (MAAA…PGTK). The Cell attachment site signature appears at 1006–1008 (RGD). A triple-helical region 2 (COL2) with 2 imperfections region spans residues 1012-1433 (GDPGCVGSPG…PGVPGSMGDM (422 aa)). The Collagen-like 6 domain occupies 1018-1075 (GSPGLPGPPGLPGQRGEEGPPGMRGSPGPPGPIGPPGFPGAVGSPGLPGLQGERGLTG). Pro residues-rich tracts occupy residues 1044–1055 (PGPPGPIGPPGF), 1160–1169 (FPGPPGPPGF), and 1199–1208 (SPGPPGPPGI). The segment covering 1217 to 1226 (LDGKDGKPGL) has biased composition (basic and acidic residues). The Cell attachment site motif lies at 1227 to 1229 (RGD). The segment covering 1271 to 1284 (RPGAEGEPGAMGPQ) has biased composition (low complexity). Pro residues-rich tracts occupy residues 1286-1302 (RPGPPGHVGPPGPPGQP) and 1330-1342 (QPGPPGHPGPPGE). Low complexity predominate over residues 1369–1378 (DPGAAGQKGQ). Positions 1386-1395 (GMPGGPGKSG) are enriched in gly residues. A compositionally biased stretch (low complexity) spans 1420–1429 (SPGLPGVPGS). Residues 1434–1472 (VNYDEIKRFIRQEIIKMFDERMAYYTSRMQFPMEMAAAP) are nonhelical region 2 (NC2). Collagen-like domains lie at 1472–1524 (PGRP…GDIG) and 1528–1576 (AGEN…GKAG). The segment at 1473–1578 (GRPGPPGKDG…MGQPGKAGHC (106 aa)) is triple-helical region 1 (COL1) with 2 imperfections. The nonhelical region 1 (NC1) stretch occupies residues 1579 to 1604 (NPSDCFGAMPMEQQYPPMKTMKGPFG).

It belongs to the fibril-associated collagens with interrupted helices (FACIT) family. In terms of assembly, homotrimer. Interacts with FBN1, fibronectin and integrins ITGA1/ITGB1 and ITGA2/ITGB1. Integrin ITGA1/ITGB1 binds to a unique site within COL16A1 located close to its C-terminal end between collagenous domains COL1-COL3. In terms of processing, prolines at the third position of the tripeptide repeating unit (G-X-Y) are hydroxylated in some or all of the chains. Post-translationally, glycosylated. As to expression, in papillary dermis, is a component of specialized fibrillin-1-containing microfibrils, whereas in territorial cartilage matrix, it is localized to a discrete population of thin, weakly banded collagen fibrils in association with other collagens (at protein level). In the placenta, where it is found in the amnion, a membranous tissue lining the amniotic cavity. Within the amnion, it is found in an acellular, relatively dense layer of a complex network of reticular fibers. Also located to a fibroblast layer beneath this dense layer. Exists in tissues in association with other types of collagen.

The protein localises to the secreted. Its subcellular location is the extracellular space. The protein resides in the extracellular matrix. Functionally, involved in mediating cell attachment and inducing integrin-mediated cellular reactions, such as cell spreading and alterations in cell morphology. The polypeptide is Collagen alpha-1(XVI) chain (COL16A1) (Homo sapiens (Human)).